The following is a 119-amino-acid chain: Large ribosomal subunit protein bL20 (119 aa).

Belongs to the bacterial ribosomal protein bL20 family.

Binds directly to 23S ribosomal RNA and is necessary for the in vitro assembly process of the 50S ribosomal subunit. It is not involved in the protein synthesizing functions of that subunit. This is Large ribosomal subunit protein bL20 from Streptococcus uberis (strain ATCC BAA-854 / 0140J).